The following is a 255-amino-acid chain: tRNA pseudouridine synthase A (255 aa).

Residue aspartate 52 is the Nucleophile of the active site. Tyrosine 111 is a substrate binding site.

Belongs to the tRNA pseudouridine synthase TruA family. As to quaternary structure, homodimer.

It carries out the reaction uridine(38/39/40) in tRNA = pseudouridine(38/39/40) in tRNA. Its function is as follows. Formation of pseudouridine at positions 38, 39 and 40 in the anticodon stem and loop of transfer RNAs. The polypeptide is tRNA pseudouridine synthase A (Nitrobacter winogradskyi (strain ATCC 25391 / DSM 10237 / CIP 104748 / NCIMB 11846 / Nb-255)).